The primary structure comprises 512 residues: MARAVHRSGLVALGIATALMASCAFAAKDVVVAVGSNFTTLDPYDANDTLSQAVAKSFYQGLFGLDKEMKLKNVLAESYTVSDDGITYTVKLREGIKFQDGTDFNAAAVKANLDRASDPANHLKRYNLYKNIAKTEAIDPTTVKITLKQPFSAFINILAHPATAMISPAALEKYGKEIGFYPVGTGPYELDTWNQTDFVKVKKFAGYWQPGLPKLDSITWRPVADNNTRAAMLQTGEAQFAFPIPYEQATLLEKNKNIELMASPSIMQRYISMNVTQKPFDNPKVREALNYAINRPALVKVAFAGYATPATGVVPPSIAYAQSYKPWPYDPVKARELLKEAGYPNGFSTTLWSSHNHSTAQKVLQFTQQQLAQVGIKAQVTAMDAGQRAAEVEGKGQKESGVRMFYTGWSASTGEADWALSPLFASQNWPPTLFNTAFYSNKQVDDFLAQALKTNDPAEKTRLYKAAQDIIWQESPWIPLVVEKLVSAHSKNLTGFWIMPDTGFSFEDADLQ.

Positions 1–26 (MARAVHRSGLVALGIATALMASCAFA) are cleaved as a signal peptide.

The protein belongs to the bacterial solute-binding protein 5 family. In terms of assembly, the complex is composed of two ATP-binding proteins (GsiA), two transmembrane proteins (GsiC and GsiD) and a solute-binding protein (GsiB). In the presence of glutathione, interacts with the transmembrane proteins GsiC and GsiD.

Its subcellular location is the periplasm. Functionally, part of the ABC transporter complex GsiABCD involved in glutathione import. Binds glutathione. This chain is Glutathione-binding protein GsiB, found in Escherichia coli (strain K12).